The following is a 337-amino-acid chain: Glucokinase (337 aa).

11 to 16 (ADIGGT) lines the ATP pocket.

Belongs to the bacterial glucokinase family.

The protein resides in the cytoplasm. The enzyme catalyses D-glucose + ATP = D-glucose 6-phosphate + ADP + H(+). In Xylella fastidiosa (strain M23), this protein is Glucokinase.